A 543-amino-acid chain; its full sequence is Heparanase (543 aa).

Positions 1-35 (MLLRSKPALPPPLMLLLLGPLGPLSPGALPRPAQA) are cleaved as a signal peptide. Heparan sulfate group contacts are provided by residues 62 to 64 (DAN) and Thr97. The propeptide at 110-157 (STFEERSYWQSQVNQDICKYGSIPPDVEEKLRLEWPYQEQLLLREHYQ) is linker peptide. Cysteines 127 and 179 form a disulfide. Heparan sulfate group is bound at residue 158–162 (KKFKN). 4 N-linked (GlcNAc...) asparagine glycosylation sites follow: Asn162, Asn178, Asn200, and Asn217. Glu225 serves as the catalytic Proton donor. Asn238 carries N-linked (GlcNAc...) asparagine glycosylation. Heparan sulfate group contacts are provided by residues 270–280 (QPRRKTAKMLK), His296, and Arg303. Residues 288-417 (EVIDSVTWHH…LLFKKLVGTK (130 aa)) form a required for heterodimerization with the heparanase 8 kDa subunit region. Glu343 functions as the Nucleophile in the catalytic mechanism. Heparan sulfate group is bound by residues 348 to 350 (YGG) and 389 to 391 (GNY). An intrachain disulfide couples Cys437 to Cys542. The N-linked (GlcNAc...) asparagine glycan is linked to Asn459. The interval 527–543 (FSYSFFVIRNAKVAACI) is required for transferring proheparanase to the Golgi apparatus, secretion and subsequent enzyme activity and for enhancement of PKB/AKT1 phosphorylation.

The protein belongs to the glycosyl hydrolase 79 family. In terms of assembly, heterodimer; heterodimer formation between the 8 kDa and the 50 kDa subunits is required for enzyme activity. Interacts with TF; the interaction, inhibited by heparin, enhances the generation of activated factor X and activates coagulation. Interacts with HRG; the interaction is enhanced at acidic pH, partially inhibits binding of HPSE to cell surface receptors and modulates its enzymatic activity. Interacts with SDC1; the interaction enhances the shedding of SDC1. Interacts with HPSE2. Proteolytically processed. The cleavage of the 65 kDa form leads to the generation of a linker peptide, and 8 kDa and 50 kDa products. The active form, the 8/50 kDa heterodimer, is resistant to degradation. Complete removal of the linker peptide appears to be a prerequisite to the complete activation of the enzyme. In terms of processing, N-glycosylated. Glycosylation of the 50 kDa subunit appears to be essential for its solubility. As to expression, highly expressed in placenta and spleen and weakly expressed in lymph node, thymus, peripheral blood leukocytes, bone marrow, endothelial cells, fetal liver and tumor tissues. Also expressed in hair follicles, specifically in both Henle's and Huxley's layers of inner the root sheath (IRS) at anagen phase.

It is found in the lysosome membrane. Its subcellular location is the secreted. It localises to the nucleus. It catalyses the reaction endohydrolysis of (1-&gt;4)-beta-D-glycosidic bonds of heparan sulfate chains in heparan sulfate proteoglycan.. With respect to regulation, inhibited by EDTA, laminarin sulfate and, to a lower extent, by heparin and sulfamin and activated by calcium and magnesium. Endoglycosidase that cleaves heparan sulfate proteoglycans (HSPGs) into heparan sulfate side chains and core proteoglycans. Participates in extracellular matrix (ECM) degradation and remodeling. Selectively cleaves the linkage between a glucuronic acid unit and an N-sulfo glucosamine unit carrying either a 3-O-sulfo or a 6-O-sulfo group. Can also cleave the linkage between a glucuronic acid unit and an N-sulfo glucosamine unit carrying a 2-O-sulfo group, but not linkages between a glucuronic acid unit and a 2-O-sulfated iduronic acid moiety. It is essentially inactive at neutral pH but becomes active under acidic conditions such as during tumor invasion and in inflammatory processes. Facilitates cell migration associated with metastasis, wound healing and inflammation. Enhances shedding of syndecans, and increases endothelial invasion and angiogenesis in myelomas. Acts as a procoagulant by increasing the generation of activation factor X in the presence of tissue factor and activation factor VII. Increases cell adhesion to the extracellular matrix (ECM), independent of its enzymatic activity. Induces AKT1/PKB phosphorylation via lipid rafts increasing cell mobility and invasion. Heparin increases this AKT1/PKB activation. Regulates osteogenesis. Enhances angiogenesis through up-regulation of SRC-mediated activation of VEGF. Implicated in hair follicle inner root sheath differentiation and hair homeostasis. The sequence is that of Heparanase (HPSE) from Homo sapiens (Human).